The following is a 584-amino-acid chain: Adenine deaminase (584 aa).

Belongs to the metallo-dependent hydrolases superfamily. Adenine deaminase family. It depends on Mn(2+) as a cofactor.

The enzyme catalyses adenine + H2O + H(+) = hypoxanthine + NH4(+). This Methanococcoides burtonii (strain DSM 6242 / NBRC 107633 / OCM 468 / ACE-M) protein is Adenine deaminase.